The following is a 336-amino-acid chain: Glucan endo-1,3-beta-glucosidase A (336 aa).

A signal peptide spans methionine 1–alanine 23. Glutamine 24 is subject to Pyrrolidone carboxylic acid. Glutamate 118 functions as the Proton donor in the catalytic mechanism. The active-site Nucleophile is glutamate 257.

Belongs to the glycosyl hydrolase 17 family.

Its subcellular location is the secreted. It is found in the extracellular space. The enzyme catalyses Hydrolysis of (1-&gt;3)-beta-D-glucosidic linkages in (1-&gt;3)-beta-D-glucans.. Its function is as follows. Implicated in the defense of plants against pathogens. This Solanum lycopersicum (Tomato) protein is Glucan endo-1,3-beta-glucosidase A.